Reading from the N-terminus, the 320-residue chain is Lipoyl synthase (320 aa).

The span at 1-11 (MGGMNDLSSTP) shows a compositional bias: polar residues. Residues 1 to 24 (MGGMNDLSSTPAPEGDRPARQRKP) are disordered. Basic and acidic residues predominate over residues 14–24 (EGDRPARQRKP). [4Fe-4S] cluster is bound by residues cysteine 53, cysteine 58, cysteine 64, cysteine 79, cysteine 83, cysteine 86, and serine 293. The region spanning 65-282 (WTKKHATVMI…GAIARAKGFL (218 aa)) is the Radical SAM core domain.

The protein belongs to the radical SAM superfamily. Lipoyl synthase family. It depends on [4Fe-4S] cluster as a cofactor.

Its subcellular location is the cytoplasm. It carries out the reaction [[Fe-S] cluster scaffold protein carrying a second [4Fe-4S](2+) cluster] + N(6)-octanoyl-L-lysyl-[protein] + 2 oxidized [2Fe-2S]-[ferredoxin] + 2 S-adenosyl-L-methionine + 4 H(+) = [[Fe-S] cluster scaffold protein] + N(6)-[(R)-dihydrolipoyl]-L-lysyl-[protein] + 4 Fe(3+) + 2 hydrogen sulfide + 2 5'-deoxyadenosine + 2 L-methionine + 2 reduced [2Fe-2S]-[ferredoxin]. It functions in the pathway protein modification; protein lipoylation via endogenous pathway; protein N(6)-(lipoyl)lysine from octanoyl-[acyl-carrier-protein]: step 2/2. Its function is as follows. Catalyzes the radical-mediated insertion of two sulfur atoms into the C-6 and C-8 positions of the octanoyl moiety bound to the lipoyl domains of lipoate-dependent enzymes, thereby converting the octanoylated domains into lipoylated derivatives. This chain is Lipoyl synthase, found in Erythrobacter litoralis (strain HTCC2594).